A 72-amino-acid chain; its full sequence is Translation initiation factor IF-1 (72 aa).

The region spanning 1–72 is the S1-like domain; sequence MSKDDVIEID…DKGRITYRYK (72 aa).

Belongs to the IF-1 family. Component of the 30S ribosomal translation pre-initiation complex which assembles on the 30S ribosome in the order IF-2 and IF-3, IF-1 and N-formylmethionyl-tRNA(fMet); mRNA recruitment can occur at any time during PIC assembly.

Its subcellular location is the cytoplasm. Its function is as follows. One of the essential components for the initiation of protein synthesis. Stabilizes the binding of IF-2 and IF-3 on the 30S subunit to which N-formylmethionyl-tRNA(fMet) subsequently binds. Helps modulate mRNA selection, yielding the 30S pre-initiation complex (PIC). Upon addition of the 50S ribosomal subunit IF-1, IF-2 and IF-3 are released leaving the mature 70S translation initiation complex. This is Translation initiation factor IF-1 from Campylobacter hominis (strain ATCC BAA-381 / DSM 21671 / CCUG 45161 / LMG 19568 / NCTC 13146 / CH001A).